The primary structure comprises 509 residues: Movement protein (509 aa).

It localises to the host cell junction. The protein resides in the host plasmodesma. The protein localises to the host cytoplasm. Transports viral genome to neighboring plant cells directly through plasmosdesmata, without any budding. The movement protein allows efficient cell to cell propagation, by bypassing the host cell wall barrier. The protein is Movement protein of Rice dwarf virus (isolate Fujian) (RDV).